The following is a 369-amino-acid chain: Ribosomal RNA large subunit methyltransferase G (369 aa).

The protein belongs to the methyltransferase superfamily. RlmG family.

It localises to the cytoplasm. It catalyses the reaction guanosine(1835) in 23S rRNA + S-adenosyl-L-methionine = N(2)-methylguanosine(1835) in 23S rRNA + S-adenosyl-L-homocysteine + H(+). Specifically methylates the guanine in position 1835 (m2G1835) of 23S rRNA. This is Ribosomal RNA large subunit methyltransferase G from Magnetococcus marinus (strain ATCC BAA-1437 / JCM 17883 / MC-1).